Here is a 320-residue protein sequence, read N- to C-terminus: Cytochrome f (320 aa).

Residues 1-35 (MEKRNTYDWVTRWVIASFSILTISYMITWTSISNA) form the signal peptide. Residues Tyr-36, Cys-56, Cys-59, and His-60 each contribute to the heme site. Residues 286–306 (IQGLLVFLASVVLAQIFLVLK) form a helical membrane-spanning segment.

This sequence belongs to the cytochrome f family. As to quaternary structure, the 4 large subunits of the cytochrome b6-f complex are cytochrome b6, subunit IV (17 kDa polypeptide, petD), cytochrome f and the Rieske protein, while the 4 small subunits are PetG, PetL, PetM and PetN. The complex functions as a dimer. Heme serves as cofactor.

It is found in the plastid. It localises to the chloroplast thylakoid membrane. In terms of biological role, component of the cytochrome b6-f complex, which mediates electron transfer between photosystem II (PSII) and photosystem I (PSI), cyclic electron flow around PSI, and state transitions. The sequence is that of Cytochrome f from Welwitschia mirabilis (Tree tumbo).